Here is a 72-residue protein sequence, read N- to C-terminus: uncharacterized protein (72 aa).

The first 22 residues, 1 to 22 (MQSNFIFATLLVLLSLLTFTYA), serve as a signal peptide directing secretion. The Extracellular portion of the chain corresponds to 23-28 (SGSSSM). The helical transmembrane segment at 29-49 (TSSSMPMFGGAIVAAFAFAIF) threads the bilayer. At 50-72 (SRLAQNFAPRAIFSLLPYHSVSC) the chain is on the cytoplasmic side.

The protein localises to the membrane. This is an uncharacterized protein from Dictyostelium discoideum (Social amoeba).